We begin with the raw amino-acid sequence, 407 residues long: Probable tRNA sulfurtransferase (407 aa).

A THUMP domain is found at 61 to 165; that stretch reads EEMCNRLKKV…LDAIYMYDQV (105 aa). Residues 183–184, 208–209, R265, G287, and Q296 contribute to the ATP site; these read ML and HF.

It belongs to the ThiI family.

It is found in the cytoplasm. The enzyme catalyses [ThiI sulfur-carrier protein]-S-sulfanyl-L-cysteine + a uridine in tRNA + 2 reduced [2Fe-2S]-[ferredoxin] + ATP + H(+) = [ThiI sulfur-carrier protein]-L-cysteine + a 4-thiouridine in tRNA + 2 oxidized [2Fe-2S]-[ferredoxin] + AMP + diphosphate. The catalysed reaction is [ThiS sulfur-carrier protein]-C-terminal Gly-Gly-AMP + S-sulfanyl-L-cysteinyl-[cysteine desulfurase] + AH2 = [ThiS sulfur-carrier protein]-C-terminal-Gly-aminoethanethioate + L-cysteinyl-[cysteine desulfurase] + A + AMP + 2 H(+). The protein operates within cofactor biosynthesis; thiamine diphosphate biosynthesis. Functionally, catalyzes the ATP-dependent transfer of a sulfur to tRNA to produce 4-thiouridine in position 8 of tRNAs, which functions as a near-UV photosensor. Also catalyzes the transfer of sulfur to the sulfur carrier protein ThiS, forming ThiS-thiocarboxylate. This is a step in the synthesis of thiazole, in the thiamine biosynthesis pathway. The sulfur is donated as persulfide by IscS. This Staphylococcus saprophyticus subsp. saprophyticus (strain ATCC 15305 / DSM 20229 / NCIMB 8711 / NCTC 7292 / S-41) protein is Probable tRNA sulfurtransferase.